A 282-amino-acid polypeptide reads, in one-letter code: MFVPFLIMFREGLEAALIVSLIASYLKRTQRGQWMGAVWVGVVVAAVLCLAIGIFINETTGEFPQKQQELFEGIIAVVAVCILTYMVFWMRKVSKSVKVHLEGAIDNALNSGRGQGWALVAMVFFAVAREGLESVFFLLAAFQQDVGIGAPIGAILGLVCAILVGMAIYWGGVKLHLAKFFKWTSLFILFVAAGLAAGAIRAFHEAGLWNHFQDIAFDLTDVLSTHSLLGTFLEGMFGYQEAPTVSEVSVYFIYLIPALILFFLPPRSTAGSAIAAARKINP.

A topological domain (periplasmic) is located at residue M1. The helical transmembrane segment at 2 to 22 threads the bilayer; sequence FVPFLIMFREGLEAALIVSLI. Residues 23 to 35 lie on the Cytoplasmic side of the membrane; sequence ASYLKRTQRGQWM. A helical transmembrane segment spans residues 36–56; it reads GAVWVGVVVAAVLCLAIGIFI. Topologically, residues 57 to 69 are periplasmic; sequence NETTGEFPQKQQE. Residues 70 to 90 form a helical membrane-spanning segment; sequence LFEGIIAVVAVCILTYMVFWM. Residues 91–118 are Cytoplasmic-facing; sequence RKVSKSVKVHLEGAIDNALNSGRGQGWA. A helical transmembrane segment spans residues 119–139; sequence LVAMVFFAVAREGLESVFFLL. The Periplasmic segment spans residues 140-147; it reads AAFQQDVG. Residues 148–168 form a helical membrane-spanning segment; it reads IGAPIGAILGLVCAILVGMAI. At 169-179 the chain is on the cytoplasmic side; the sequence is YWGGVKLHLAK. The helical transmembrane segment at 180–200 threads the bilayer; the sequence is FFKWTSLFILFVAAGLAAGAI. Topologically, residues 201 to 244 are periplasmic; that stretch reads RAFHEAGLWNHFQDIAFDLTDVLSTHSLLGTFLEGMFGYQEAPT. A helical transmembrane segment spans residues 245–265; the sequence is VSEVSVYFIYLIPALILFFLP. At 266 to 282 the chain is on the cytoplasmic side; sequence PRSTAGSAIAAARKINP.

This sequence belongs to the oxidase-dependent Fe transporter (OFeT) (TC 9.A.10.1) family. As to quaternary structure, part of a ferrous iron transporter composed of EfeU, EfeO and EfeB.

The protein localises to the cell inner membrane. Its function is as follows. Uptake of Fe(2+) ions across the membrane. This Yersinia pestis bv. Antiqua (strain Antiqua) protein is Ferrous iron permease EfeU (efeU).